A 201-amino-acid polypeptide reads, in one-letter code: Glycerol-3-phosphate acyltransferase (201 aa).

The next 5 membrane-spanning stretches (helical) occupy residues 10-30, 60-80, 86-106, 116-136, and 166-186; these read MLIG…GLIL, LAAA…LIAA, AAIA…WIGF, LGVL…AWIV, and ALAA…RANI.

Belongs to the PlsY family. Probably interacts with PlsX.

The protein resides in the cell inner membrane. It catalyses the reaction an acyl phosphate + sn-glycerol 3-phosphate = a 1-acyl-sn-glycero-3-phosphate + phosphate. Its pathway is lipid metabolism; phospholipid metabolism. Catalyzes the transfer of an acyl group from acyl-phosphate (acyl-PO(4)) to glycerol-3-phosphate (G3P) to form lysophosphatidic acid (LPA). This enzyme utilizes acyl-phosphate as fatty acyl donor, but not acyl-CoA or acyl-ACP. The polypeptide is Glycerol-3-phosphate acyltransferase (Brucella abortus (strain 2308)).